The following is a 344-amino-acid chain: L-threonine 3-dehydrogenase (344 aa).

C42 serves as a coordination point for Zn(2+). Residues T44 and H47 each act as charge relay system in the active site. Positions 67, 68, 97, 100, 103, and 111 each coordinate Zn(2+). NAD(+) is bound by residues I179, D199, R204, 266–268 (LGI), and 290–291 (IY).

Belongs to the zinc-containing alcohol dehydrogenase family. As to quaternary structure, homotetramer. The cofactor is Zn(2+).

It is found in the cytoplasm. It catalyses the reaction L-threonine + NAD(+) = (2S)-2-amino-3-oxobutanoate + NADH + H(+). It participates in amino-acid degradation; L-threonine degradation via oxydo-reductase pathway; glycine from L-threonine: step 1/2. Catalyzes the NAD(+)-dependent oxidation of L-threonine to 2-amino-3-ketobutyrate. This chain is L-threonine 3-dehydrogenase, found in Chelativorans sp. (strain BNC1).